A 59-amino-acid polypeptide reads, in one-letter code: UPF0434 protein Shew185_1670 (59 aa).

It belongs to the UPF0434 family.

The sequence is that of UPF0434 protein Shew185_1670 from Shewanella baltica (strain OS185).